The sequence spans 427 residues: Glutamate-1-semialdehyde 2,1-aminomutase (427 aa).

Residue K265 is modified to N6-(pyridoxal phosphate)lysine.

This sequence belongs to the class-III pyridoxal-phosphate-dependent aminotransferase family. HemL subfamily. In terms of assembly, homodimer. Pyridoxal 5'-phosphate is required as a cofactor.

It localises to the cytoplasm. The catalysed reaction is (S)-4-amino-5-oxopentanoate = 5-aminolevulinate. It participates in porphyrin-containing compound metabolism; protoporphyrin-IX biosynthesis; 5-aminolevulinate from L-glutamyl-tRNA(Glu): step 2/2. This Burkholderia multivorans (strain ATCC 17616 / 249) protein is Glutamate-1-semialdehyde 2,1-aminomutase.